A 512-amino-acid polypeptide reads, in one-letter code: Alpha-amylase (512 aa).

An N-terminal signal peptide occupies residues Met-1–Ala-15. 3 disulfide bridges follow: Cys-43-Cys-101, Cys-85-Cys-130, and Cys-156-Cys-175. Positions 115, 173, and 182 each coordinate Ca(2+). Arg-210 contacts chloride. Residue Asp-212 is the Nucleophile of the active site. Residue His-216 coordinates Ca(2+). Glu-248 acts as the Proton donor in catalysis. Arg-352 contributes to the chloride binding site. Cystine bridges form between Cys-394-Cys-400 and Cys-466-Cys-478. A glycan (N-linked (GlcNAc...) asparagine) is linked at Asn-496.

Belongs to the glycosyl hydrolase 13 family. Requires Ca(2+) as cofactor. It depends on chloride as a cofactor.

It localises to the secreted. The enzyme catalyses Endohydrolysis of (1-&gt;4)-alpha-D-glucosidic linkages in polysaccharides containing three or more (1-&gt;4)-alpha-linked D-glucose units.. Catalyzes the hydrolysis of alpha-1,4 glycosidic linkages in starch, glycogen and similar oligosaccharides. This is Alpha-amylase from Oryzias latipes (Japanese rice fish).